The sequence spans 97 residues: Nucleoid-associated protein HP_0035 (97 aa).

The protein belongs to the YbaB/EbfC family. Homodimer.

It is found in the cytoplasm. The protein localises to the nucleoid. Functionally, binds to DNA and alters its conformation. May be involved in regulation of gene expression, nucleoid organization and DNA protection. The chain is Nucleoid-associated protein HP_0035 from Helicobacter pylori (strain ATCC 700392 / 26695) (Campylobacter pylori).